The chain runs to 306 residues: Curved DNA-binding protein (306 aa).

The 65-residue stretch at 5 to 69 folds into the J domain; sequence DYYAIMGVKP…QRRAEYDQLW (65 aa).

Its subcellular location is the cytoplasm. It localises to the nucleoid. Its function is as follows. DNA-binding protein that preferentially recognizes a curved DNA sequence. It is probably a functional analog of DnaJ; displays overlapping activities with DnaJ, but functions under different conditions, probably acting as a molecular chaperone in an adaptive response to environmental stresses other than heat shock. Lacks autonomous chaperone activity; binds native substrates and targets them for recognition by DnaK. Its activity is inhibited by the binding of CbpM. This chain is Curved DNA-binding protein, found in Salmonella paratyphi A (strain ATCC 9150 / SARB42).